A 209-amino-acid chain; its full sequence is 3-demethoxyubiquinol 3-hydroxylase (209 aa).

Residues Glu58, Glu88, His91, Glu140, Glu172, and His175 each contribute to the Fe cation site.

This sequence belongs to the COQ7 family. It depends on Fe cation as a cofactor.

It localises to the cell membrane. It catalyses the reaction a 5-methoxy-2-methyl-3-(all-trans-polyprenyl)benzene-1,4-diol + AH2 + O2 = a 3-demethylubiquinol + A + H2O. It participates in cofactor biosynthesis; ubiquinone biosynthesis. In terms of biological role, catalyzes the hydroxylation of 2-nonaprenyl-3-methyl-6-methoxy-1,4-benzoquinol during ubiquinone biosynthesis. The protein is 3-demethoxyubiquinol 3-hydroxylase of Polynucleobacter necessarius subsp. necessarius (strain STIR1).